We begin with the raw amino-acid sequence, 841 residues long: Protein translocase subunit SecA (841 aa).

Residues 79 to 80 (MF), glutamine 85, 103 to 107 (GEGKT), and aspartate 492 contribute to the ATP site. Residues 786–813 (REEVVQGQTTAHQPQEGDDNKKAKKAPV) form a disordered region. Zn(2+) is bound by residues cysteine 825, cysteine 827, cysteine 836, and cysteine 837.

Belongs to the SecA family. As to quaternary structure, part of the essential Sec protein translocation apparatus which comprises SecA, SecYEG and auxiliary proteins SecDF. Other proteins may be involved. Monomer and many different homodimers can be isolated, some of which are not formed in the presence of a synthetic signal peptide. A single SecA monomer interacts with SecY in the channel. Only shows some colocalization with FloA or FloT membrane assemblies. Zn(2+) serves as cofactor.

It localises to the cell membrane. The protein localises to the cytoplasm. The protein resides in the membrane raft. The enzyme catalyses ATP + H2O + cellular proteinSide 1 = ADP + phosphate + cellular proteinSide 2.. In terms of biological role, part of the Sec protein translocase complex. Interacts with the SecYEG preprotein conducting channel. Has a central role in coupling the hydrolysis of ATP to the transfer of proteins into and across the cell membrane, serving as an ATP-driven molecular motor driving the stepwise translocation of polypeptide chains across the membrane. This Bacillus subtilis (strain 168) protein is Protein translocase subunit SecA.